A 385-amino-acid chain; its full sequence is MDDELDYGSDHSIHGDVREDLSDSELQLPKDRLDAIIDRKEKIATEKAFGINDSSDKHLNVSIAETAALRKEIGASDQNSHLDSIYAHGVEAMDEFEIQKMFANFRPEKVWKKDNVAMVQFQYRRDVAAMMLNMSKMMRRVRGRKKADEEGEVLSDDDDVEEGQIMQEKDDDVELIEDLKPNEKGIVASEKNNEFITVDINAREVPNGKWRVLTKHVPANMFVIIRYATTDEYQTMVTSDRSQVKKTGVKRGNDSFWTHESSNRGGLNVFDKEGKELEWDYEHDTRFYNEDKNEEKVEKVKLPQGIKIKGRGAVKCGFLFGEGSSSLASDDTTPVKKRRTDEKDYEKDDIVSRQGSSAHAIRPGRVERPIRERIQFPGREDPDEY.

Disordered regions lie at residues 1–20 (MDDE…VRED) and 326–385 (SLAS…PDEY). 3 stretches are compositionally biased toward basic and acidic residues: residues 8 to 20 (GSDH…VRED), 339 to 351 (RTDE…DDIV), and 364 to 385 (GRVE…PDEY).

The protein is Protein kup-1 (kup-1) of Caenorhabditis elegans.